Consider the following 488-residue polypeptide: Catalase (488 aa).

The disordered stretch occupies residues 1 to 24; the sequence is MTERKNLTTNQGTPVGDNQNSMTA. Polar residues predominate over residues 7 to 23; the sequence is LTTNQGTPVGDNQNSMT. Catalysis depends on residues His-55 and Asn-128. Tyr-338 serves as a coordination point for heme.

It belongs to the catalase family. It depends on heme as a cofactor.

The protein resides in the cytoplasm. It carries out the reaction 2 H2O2 = O2 + 2 H2O. In terms of biological role, decomposes hydrogen peroxide into water and oxygen; serves to protect cells from the toxic effects of hydrogen peroxide. The polypeptide is Catalase (kat) (Listeria innocua serovar 6a (strain ATCC BAA-680 / CLIP 11262)).